The following is a 345-amino-acid chain: Phosphoribosylformylglycinamidine cyclo-ligase (345 aa).

Belongs to the AIR synthase family.

It localises to the cytoplasm. The catalysed reaction is 2-formamido-N(1)-(5-O-phospho-beta-D-ribosyl)acetamidine + ATP = 5-amino-1-(5-phospho-beta-D-ribosyl)imidazole + ADP + phosphate + H(+). The protein operates within purine metabolism; IMP biosynthesis via de novo pathway; 5-amino-1-(5-phospho-D-ribosyl)imidazole from N(2)-formyl-N(1)-(5-phospho-D-ribosyl)glycinamide: step 2/2. This chain is Phosphoribosylformylglycinamidine cyclo-ligase, found in Aeromonas salmonicida (strain A449).